Here is a 226-residue protein sequence, read N- to C-terminus: ATP synthase F(0) complex subunit a (226 aa).

6 helical membrane passes run 13–33 (VILG…LISW), 69–89 (WALL…LGLL), 97–117 (TQLS…VIMA), 138–158 (IPVL…ALGV), 179–199 (FVLL…LFLL), and 201–221 (LLEI…LSLY).

It belongs to the ATPase A chain family. As to quaternary structure, component of the ATP synthase complex composed at least of ATP5F1A/subunit alpha, ATP5F1B/subunit beta, ATP5MC1/subunit c (homooctomer), MT-ATP6/subunit a, MT-ATP8/subunit 8, ATP5ME/subunit e, ATP5MF/subunit f, ATP5MG/subunit g, ATP5MK/subunit k, ATP5MJ/subunit j, ATP5F1C/subunit gamma, ATP5F1D/subunit delta, ATP5F1E/subunit epsilon, ATP5PF/subunit F6, ATP5PB/subunit b, ATP5PD/subunit d, ATP5PO/subunit OSCP. ATP synthase complex consists of a soluble F(1) head domain (subunits alpha(3) and beta(3)) - the catalytic core - and a membrane F(0) domain - the membrane proton channel (subunits c, a, 8, e, f, g, k and j). These two domains are linked by a central stalk (subunits gamma, delta, and epsilon) rotating inside the F1 region and a stationary peripheral stalk (subunits F6, b, d, and OSCP). Interacts with DNAJC30; interaction is direct.

It localises to the mitochondrion inner membrane. It catalyses the reaction H(+)(in) = H(+)(out). Functionally, subunit a, of the mitochondrial membrane ATP synthase complex (F(1)F(0) ATP synthase or Complex V) that produces ATP from ADP in the presence of a proton gradient across the membrane which is generated by electron transport complexes of the respiratory chain. ATP synthase complex consist of a soluble F(1) head domain - the catalytic core - and a membrane F(1) domain - the membrane proton channel. These two domains are linked by a central stalk rotating inside the F(1) region and a stationary peripheral stalk. During catalysis, ATP synthesis in the catalytic domain of F(1) is coupled via a rotary mechanism of the central stalk subunits to proton translocation. With the subunit c (ATP5MC1), forms the proton-conducting channel in the F(0) domain, that contains two crucial half-channels (inlet and outlet) that facilitate proton movement from the mitochondrial intermembrane space (IMS) into the matrix. Protons are taken up via the inlet half-channel and released through the outlet half-channel, following a Grotthuss mechanism. The chain is ATP synthase F(0) complex subunit a from Xenopus laevis (African clawed frog).